We begin with the raw amino-acid sequence, 491 residues long: Synaptotagmin-9 (491 aa).

The Vesicular segment spans residues 1 to 52 (MPGARDALCHQALQLLAELCARGALEHDSCQDFIYHLRDRARPRLRDPDISV). Residues 9–31 (CHQALQLLAELCARGALEHDSCQ) are cysteine motif. A helical transmembrane segment spans residues 53 to 73 (SLLTLVVTACGLALFGVSLFV). The Cytoplasmic portion of the chain corresponds to 74 to 491 (SWKLCWVPWR…AHWHSLVEKR (418 aa)). Residue Ser177 is modified to Phosphoserine. C2 domains follow at residues 220 to 341 (ACGK…ILWK) and 352 to 485 (DLGE…AHWH). The Ca(2+) site is built by Asp251, Asp257, Asp309, Phe310, Asp311, Ser314, Asp317, Asp383, Asp389, Asp443, and Asp445.

This sequence belongs to the synaptotagmin family. Homodimer; disulfide-linked via the cysteine motif. Can also form heterodimers with SYT3, SYT6, SYT7 and SYT10. The cofactor is Ca(2+).

It is found in the cytoplasmic vesicle. The protein resides in the secretory vesicle. It localises to the synaptic vesicle membrane. Its function is as follows. May be involved in Ca(2+)-dependent exocytosis of secretory vesicles through Ca(2+) and phospholipid binding to the C2 domain or may serve as Ca(2+) sensors in the process of vesicular trafficking and exocytosis. This chain is Synaptotagmin-9 (SYT9), found in Homo sapiens (Human).